The chain runs to 267 residues: Small ribosomal subunit protein uS10m (267 aa).

A mitochondrion-targeting transit peptide spans 1 to 10; it reads MLSRILGVRN.

It belongs to the universal ribosomal protein uS10 family. Part of the mitochondrial small ribosomal subunit.

It is found in the mitochondrion. Functionally, involved in mitochondrial genome encoded proteins translation. Involved in the binding of tRNA to the ribosomes. This is Small ribosomal subunit protein uS10m (RSM10) from Debaryomyces hansenii (strain ATCC 36239 / CBS 767 / BCRC 21394 / JCM 1990 / NBRC 0083 / IGC 2968) (Yeast).